Here is a 573-residue protein sequence, read N- to C-terminus: 60 kDa heat shock protein, mitochondrial (573 aa).

A mitochondrion-targeting transit peptide spans 1–26 (MLRLPTVLRQMRPVSRALAPHLTRAY). K31 carries the N6-succinyllysine modification. Residues S67 and S70 each carry the phosphoserine modification. K75 serves as a coordination point for ATP. K75 carries the post-translational modification N6-acetyllysine. K82 is subject to N6-acetyllysine; alternate. K82 carries the N6-succinyllysine; alternate modification. An N6-acetyllysine modification is found at K87. Y90 carries the post-translational modification Phosphotyrosine. Residue K91 is modified to N6-acetyllysine. 111–115 (DGTTT) serves as a coordination point for ATP. K125 bears the N6-acetyllysine; alternate mark. K125 is modified (N6-succinyllysine; alternate). Residue K130 is modified to N6-acetyllysine. K133 bears the N6-acetyllysine; alternate mark. Residue K133 is modified to N6-succinyllysine; alternate. K133 carries the post-translational modification N6-malonyllysine; alternate. Position 156 is an N6-acetyllysine (K156). 5 positions are modified to N6-acetyllysine; alternate: K191, K202, K205, K218, and K236. An N6-succinyllysine; alternate mark is found at K191, K202, K205, K218, and K236. K249 is modified (N6-acetyllysine). K250 carries the N6-acetyllysine; alternate modification. Position 250 is an N6-succinyllysine; alternate (K250). Residues K269 and K292 each carry the N6-acetyllysine modification. An N6-succinyllysine modification is found at K301. K314 is subject to N6-acetyllysine. An N6-acetyllysine; alternate modification is found at K352. K352 is modified (N6-succinyllysine; alternate). 2 positions are modified to N6-acetyllysine: K359 and K389. The residue at position 396 (K396) is an N6-acetyllysine; alternate. N6-succinyllysine; alternate is present on K396. Residue S410 is modified to Phosphoserine. G440 serves as a coordination point for ATP. At K455 the chain carries N6-acetyllysine; alternate. Position 455 is an N6-succinyllysine; alternate (K455). At K469 the chain carries N6-acetyllysine. K481 is subject to N6-acetyllysine; alternate. K481 is subject to N6-succinyllysine; alternate. S488 bears the Phosphoserine mark. An ATP-binding site is contributed by D520. A Glycyl lysine isopeptide (Lys-Gly) (interchain with G-Cter in SUMO2) cross-link involves residue K551.

The protein belongs to the chaperonin (HSP60) family. As to quaternary structure, homoheptamer arranged in a ring structure. The functional units of these chaperonins consist of heptameric rings of the large subunit Hsp60, which function as a back-to-back double ring. Interacts with 2 heptameric Hsp10 rings to form the symmetrical football complex. Interacts with HRAS. Interacts with ATAD3A. Interacts with ETFBKMT and EEF1AKMT3. Interacts with MFHAS1.

The protein localises to the mitochondrion matrix. It carries out the reaction ATP + H2O + a folded polypeptide = ADP + phosphate + an unfolded polypeptide.. Chaperonin implicated in mitochondrial protein import and macromolecular assembly. Together with Hsp10, facilitates the correct folding of imported proteins. May also prevent misfolding and promote the refolding and proper assembly of unfolded polypeptides generated under stress conditions in the mitochondrial matrix. The functional units of these chaperonins consist of heptameric rings of the large subunit Hsp60, which function as a back-to-back double ring. In a cyclic reaction, Hsp60 ring complexes bind one unfolded substrate protein per ring, followed by the binding of ATP and association with 2 heptameric rings of the co-chaperonin Hsp10. This leads to sequestration of the substrate protein in the inner cavity of Hsp60 where, for a certain period of time, it can fold undisturbed by other cell components. Synchronous hydrolysis of ATP in all Hsp60 subunits results in the dissociation of the chaperonin rings and the release of ADP and the folded substrate protein. The polypeptide is 60 kDa heat shock protein, mitochondrial (HSPD1) (Cricetulus griseus (Chinese hamster)).